The primary structure comprises 954 residues: Glycine dehydrogenase (decarboxylating) (954 aa).

Lysine 704 bears the N6-(pyridoxal phosphate)lysine mark.

The protein belongs to the GcvP family. The glycine cleavage system is composed of four proteins: P, T, L and H. The cofactor is pyridoxal 5'-phosphate.

The enzyme catalyses N(6)-[(R)-lipoyl]-L-lysyl-[glycine-cleavage complex H protein] + glycine + H(+) = N(6)-[(R)-S(8)-aminomethyldihydrolipoyl]-L-lysyl-[glycine-cleavage complex H protein] + CO2. Its function is as follows. The glycine cleavage system catalyzes the degradation of glycine. The P protein binds the alpha-amino group of glycine through its pyridoxal phosphate cofactor; CO(2) is released and the remaining methylamine moiety is then transferred to the lipoamide cofactor of the H protein. In Rhizobium johnstonii (strain DSM 114642 / LMG 32736 / 3841) (Rhizobium leguminosarum bv. viciae), this protein is Glycine dehydrogenase (decarboxylating).